The following is a 276-amino-acid chain: Large ribosomal subunit protein uL2 (276 aa).

The interval 224–276 is disordered; that stretch reads VMNPVDHPHGGGEGKAPIGRKSPMTPWGKPTLGYKTRKKKNKSDKFIIRRRKK. Residues 258 to 276 are compositionally biased toward basic residues; it reads KTRKKKNKSDKFIIRRRKK.

The protein belongs to the universal ribosomal protein uL2 family. In terms of assembly, part of the 50S ribosomal subunit. Forms a bridge to the 30S subunit in the 70S ribosome.

Its function is as follows. One of the primary rRNA binding proteins. Required for association of the 30S and 50S subunits to form the 70S ribosome, for tRNA binding and peptide bond formation. It has been suggested to have peptidyltransferase activity; this is somewhat controversial. Makes several contacts with the 16S rRNA in the 70S ribosome. This Geobacillus kaustophilus (strain HTA426) protein is Large ribosomal subunit protein uL2.